Here is a 644-residue protein sequence, read N- to C-terminus: Tripeptidyl-peptidase sed1 (644 aa).

Positions 1–18 (MRLSHVLLGTAAAAGVLA) are cleaved as a signal peptide. Positions 19 to 196 (SPTPNDYVVH…KARSIEKRSF (178 aa)) are cleaved as a propeptide — removed in mature form. Residues 224–643 (AITPLCISAL…PALLDLFMSL (420 aa)) form the Peptidase S53 domain. N-linked (GlcNAc...) asparagine glycosylation is present at asparagine 235. Catalysis depends on charge relay system residues glutamate 300 and aspartate 304. Asparagine 326, asparagine 332, and asparagine 519 each carry an N-linked (GlcNAc...) asparagine glycan. The active-site Charge relay system is serine 561. Residues aspartate 602, isoleucine 603, glycine 621, and aspartate 623 each contribute to the Ca(2+) site.

Requires Ca(2+) as cofactor. In terms of processing, N-glycosylated.

It is found in the secreted. The protein localises to the extracellular space. It carries out the reaction Release of an N-terminal tripeptide from a polypeptide.. Secreted tripeptidyl-peptidase which degrades proteins at acidic pHs and is involved in virulence. In Aspergillus fumigatus (strain ATCC MYA-4609 / CBS 101355 / FGSC A1100 / Af293) (Neosartorya fumigata), this protein is Tripeptidyl-peptidase sed1 (sed1).